Here is a 22-residue protein sequence, read N- to C-terminus: Cysteine proteinase (22 aa).

A disordered region spans residues 1-22 (GADDSDWRKKGAVNVIXKDQGQ).

It belongs to the peptidase C1 family.

In Trichomonas vaginalis, this protein is Cysteine proteinase.